Reading from the N-terminus, the 287-residue chain is Pyridoxal kinase PdxY (287 aa).

Substrate contacts are provided by residues Ser-9 and 44 to 45 (MQ). Residues Asp-111, Ala-142, Glu-147, and Lys-180 each coordinate ATP. Asp-221 provides a ligand contact to substrate.

The protein belongs to the pyridoxine kinase family. PdxY subfamily. In terms of assembly, homodimer. It depends on Mg(2+) as a cofactor.

The catalysed reaction is pyridoxal + ATP = pyridoxal 5'-phosphate + ADP + H(+). The protein operates within cofactor metabolism; pyridoxal 5'-phosphate salvage; pyridoxal 5'-phosphate from pyridoxal: step 1/1. In terms of biological role, pyridoxal kinase involved in the salvage pathway of pyridoxal 5'-phosphate (PLP). Catalyzes the phosphorylation of pyridoxal to PLP. The sequence is that of Pyridoxal kinase PdxY from Burkholderia pseudomallei (strain K96243).